We begin with the raw amino-acid sequence, 232 residues long: LexA repressor (232 aa).

Positions 1–25 are disordered; that stretch reads MSDDSSDSTDAPGTSRSRDSGLTER. The segment covering 16–25 has biased composition (basic and acidic residues); sequence RSRDSGLTER. Residues 46–66 constitute a DNA-binding region (H-T-H motif); sequence IREIGDAVGLTSTSSVAHQLR. Residues S156 and K193 each act as for autocatalytic cleavage activity in the active site.

The protein belongs to the peptidase S24 family. Homodimer.

The catalysed reaction is Hydrolysis of Ala-|-Gly bond in repressor LexA.. Functionally, represses a number of genes involved in the response to DNA damage (SOS response), including recA and lexA. In the presence of single-stranded DNA, RecA interacts with LexA causing an autocatalytic cleavage which disrupts the DNA-binding part of LexA, leading to derepression of the SOS regulon and eventually DNA repair. This is LexA repressor from Mycolicibacterium gilvum (strain PYR-GCK) (Mycobacterium gilvum (strain PYR-GCK)).